A 65-amino-acid polypeptide reads, in one-letter code: Alpha-toxin Bs-Tx28 (65 aa).

In terms of domain architecture, LCN-type CS-alpha/beta spans 3–65 (RDAYIADDKN…VPIRIPGKCR (63 aa)). Cystine bridges form between cysteine 13-cysteine 64, cysteine 17-cysteine 37, cysteine 23-cysteine 47, and cysteine 27-cysteine 49. An Arginine amide modification is found at arginine 65.

This sequence belongs to the long (4 C-C) scorpion toxin superfamily. Sodium channel inhibitor family. Alpha subfamily. In terms of tissue distribution, expressed by the venom gland.

It localises to the secreted. Functionally, alpha toxins bind voltage-independently at site-3 of sodium channels (Nav) and inhibit the inactivation of the activated channels, thereby blocking neuronal transmission. This toxin inhibits the inactivation of activated TTX-sensitive sodium channels (Nav). In Hottentotta tamulus sindicus (Scorpion), this protein is Alpha-toxin Bs-Tx28.